A 198-amino-acid chain; its full sequence is Endonuclease V (198 aa).

Positions 38 and 101 each coordinate Mg(2+).

It belongs to the endonuclease V family. Mg(2+) is required as a cofactor.

The protein resides in the cytoplasm. The enzyme catalyses Endonucleolytic cleavage at apurinic or apyrimidinic sites to products with a 5'-phosphate.. DNA repair enzyme involved in the repair of deaminated bases. Selectively cleaves double-stranded DNA at the second phosphodiester bond 3' to a deoxyinosine leaving behind the intact lesion on the nicked DNA. The sequence is that of Endonuclease V from Saccharolobus islandicus (strain M.16.4 / Kamchatka #3) (Sulfolobus islandicus).